Consider the following 415-residue polypeptide: UDP-N-acetylglucosamine 1-carboxyvinyltransferase (415 aa).

A phosphoenolpyruvate-binding site is contributed by 22 to 23 (KN). A UDP-N-acetyl-alpha-D-glucosamine-binding site is contributed by Arg92. The Proton donor role is filled by Cys116. A 2-(S-cysteinyl)pyruvic acid O-phosphothioketal modification is found at Cys116. Residues 121-125 (RPIDL), Asp304, and Val326 contribute to the UDP-N-acetyl-alpha-D-glucosamine site.

This sequence belongs to the EPSP synthase family. MurA subfamily.

It is found in the cytoplasm. It catalyses the reaction phosphoenolpyruvate + UDP-N-acetyl-alpha-D-glucosamine = UDP-N-acetyl-3-O-(1-carboxyvinyl)-alpha-D-glucosamine + phosphate. It functions in the pathway cell wall biogenesis; peptidoglycan biosynthesis. In terms of biological role, cell wall formation. Adds enolpyruvyl to UDP-N-acetylglucosamine. This chain is UDP-N-acetylglucosamine 1-carboxyvinyltransferase, found in Halothermothrix orenii (strain H 168 / OCM 544 / DSM 9562).